The following is a 483-amino-acid chain: Auxin transporter-like protein 2 (483 aa).

At 1–53 (MENGEKAAETVVVGNYVEMEKDGKALDIKSKLSDMFWHGGSAYDAWFSCASNQ) the chain is on the cytoplasmic side. A helical transmembrane segment spans residues 54-71 (VAQVLLTLPYSFSQLGML). Residues 72–73 (SG) are Extracellular-facing. Residues 74–94 (ILFQLFYGILGSWTAYLISIL) traverse the membrane as a helical segment. Residues 95 to 130 (YVEYRTRKEREKVNFRNHVIQWFEVLDGLLGKHWRN) lie on the Cytoplasmic side of the membrane. A helical transmembrane segment spans residues 131 to 151 (VGLAFNCTFLLFGSVIQLIAC). Residues 152–166 (ASNIYYINDNLDKRT) lie on the Extracellular side of the membrane. The chain crosses the membrane as a helical span at residues 167-187 (WTYIFGACCATTVFIPSFHNY). Residues 188–190 (RIW) are Cytoplasmic-facing. Residues 191–211 (SFLGLLMTTYTAWYLTIASIL) form a helical membrane-spanning segment. Residues 212–226 (HGQVEGVKHSGPSKL) lie on the Extracellular side of the membrane. Residues 227–247 (VLYFTGATNILYTFGGHAVTV) traverse the membrane as a helical segment. Residues 248-261 (EIMHAMWKPQKFKS) lie on the Cytoplasmic side of the membrane. Residues 262-282 (IYLFATLYVLTLTLPSASAVY) traverse the membrane as a helical segment. The Extracellular portion of the chain corresponds to 283-306 (WAFGDLLLNHSNAFALLPKNLYRD). The N-linked (GlcNAc...) asparagine glycan is linked to Asn291. The helical transmembrane segment at 307–327 (FAVVLMLIHQFITFGFACTPL) threads the bilayer. The Cytoplasmic segment spans residues 328–350 (YFVWEKLIGMHECRSMCKRAAAR). Residues 351 to 371 (LPVVIPIWFLAIIFPFFGPIN) form a helical membrane-spanning segment. Over 372-374 (STV) the chain is Extracellular. Residues 375-395 (GSLLVSFTVYIIPALAHIFTF) traverse the membrane as a helical segment. The Cytoplasmic portion of the chain corresponds to 396–422 (RSSAARENAVEQPPRFLGRWTGAFTIN). The chain crosses the membrane as a helical span at residues 423-443 (AFIVVWVFIVGFGFGGWASMI). The Extracellular portion of the chain corresponds to 444-483 (NFVHQIDTFGLFTKCYQCPPPVMVSPPPISHPHFNHTHGL). Asn478 is a glycosylation site (N-linked (GlcNAc...) asparagine).

The protein belongs to the amino acid/polyamine transporter 2 family. Amino acid/auxin permease (AAAP) (TC 2.A.18.1) subfamily.

The protein resides in the cell membrane. Functionally, carrier protein involved in proton-driven auxin influx. Mediates the formation of auxin gradient from developing leaves (site of auxin biosynthesis) to tips by contributing to the loading of auxin in vascular tissues and facilitating acropetal (base to tip) auxin transport within inner tissues of the root apex, and basipetal (tip to base) auxin transport within outer tissues of the root apex. This is Auxin transporter-like protein 2 (LAX2) from Arabidopsis thaliana (Mouse-ear cress).